The chain runs to 104 residues: Large ribosomal subunit protein uL24 (104 aa).

Belongs to the universal ribosomal protein uL24 family. Part of the 50S ribosomal subunit.

One of two assembly initiator proteins, it binds directly to the 5'-end of the 23S rRNA, where it nucleates assembly of the 50S subunit. Functionally, one of the proteins that surrounds the polypeptide exit tunnel on the outside of the subunit. The sequence is that of Large ribosomal subunit protein uL24 from Clostridium botulinum (strain Eklund 17B / Type B).